The sequence spans 398 residues: 4-hydroxy-3-methylbut-2-enyl diphosphate reductase (398 aa).

Cys-66 serves as a coordination point for [4Fe-4S] cluster. His-96 contributes to the (2E)-4-hydroxy-3-methylbut-2-enyl diphosphate binding site. Dimethylallyl diphosphate is bound at residue His-96. His-96 contributes to the isopentenyl diphosphate binding site. Cys-157 contacts [4Fe-4S] cluster. Position 185 (His-185) interacts with (2E)-4-hydroxy-3-methylbut-2-enyl diphosphate. His-185 contacts dimethylallyl diphosphate. His-185 is a binding site for isopentenyl diphosphate. The active-site Proton donor is Glu-187. Thr-250 lines the (2E)-4-hydroxy-3-methylbut-2-enyl diphosphate pocket. Position 288 (Cys-288) interacts with [4Fe-4S] cluster. (2E)-4-hydroxy-3-methylbut-2-enyl diphosphate-binding residues include Ser-317, Ser-318, Asn-319, and Ser-380. Residues Ser-317, Ser-318, Asn-319, and Ser-380 each coordinate dimethylallyl diphosphate. Ser-317, Ser-318, Asn-319, and Ser-380 together coordinate isopentenyl diphosphate.

It belongs to the IspH family. It depends on [4Fe-4S] cluster as a cofactor.

It carries out the reaction isopentenyl diphosphate + 2 oxidized [2Fe-2S]-[ferredoxin] + H2O = (2E)-4-hydroxy-3-methylbut-2-enyl diphosphate + 2 reduced [2Fe-2S]-[ferredoxin] + 2 H(+). The enzyme catalyses dimethylallyl diphosphate + 2 oxidized [2Fe-2S]-[ferredoxin] + H2O = (2E)-4-hydroxy-3-methylbut-2-enyl diphosphate + 2 reduced [2Fe-2S]-[ferredoxin] + 2 H(+). It participates in isoprenoid biosynthesis; dimethylallyl diphosphate biosynthesis; dimethylallyl diphosphate from (2E)-4-hydroxy-3-methylbutenyl diphosphate: step 1/1. The protein operates within isoprenoid biosynthesis; isopentenyl diphosphate biosynthesis via DXP pathway; isopentenyl diphosphate from 1-deoxy-D-xylulose 5-phosphate: step 6/6. Catalyzes the conversion of 1-hydroxy-2-methyl-2-(E)-butenyl 4-diphosphate (HMBPP) into a mixture of isopentenyl diphosphate (IPP) and dimethylallyl diphosphate (DMAPP). Acts in the terminal step of the DOXP/MEP pathway for isoprenoid precursor biosynthesis. In Prochlorococcus marinus (strain MIT 9515), this protein is 4-hydroxy-3-methylbut-2-enyl diphosphate reductase.